The sequence spans 433 residues: ACT domain-containing protein ACR6 (433 aa).

ACT domains are found at residues 30–110, 120–207, 250–326, and 328–402; these read VIQV…RSSV, SIEL…SCSD, VVTM…ASEG, and ELEL…VKKK.

May bind amino acids. The protein is ACT domain-containing protein ACR6 of Arabidopsis thaliana (Mouse-ear cress).